Reading from the N-terminus, the 245-residue chain is uncharacterized protein (245 aa).

To M.tuberculosis Rv2927c.

This is an uncharacterized protein from Mycobacterium leprae (strain TN).